The chain runs to 1171 residues: Pyruvate:ferredoxin oxidoreductase (1171 aa).

Positions 29 and 112 each coordinate pyruvate. Residues 424–428, Lys-456, Asn-556, and Asn-598 contribute to the CoA site; that span reads SDGTV. 2 consecutive 4Fe-4S ferredoxin-type domains span residues 677-706 and 733-764; these read NIPQWQPENCIQCNQCSLVCPHAAIRPYLA and FRIQVSPLDCTGCGNCADVCPAKVKALTMVPL. Cys-686, Cys-689, Cys-692, Cys-696, Cys-742, Cys-745, Cys-748, Cys-752, Cys-809, and Cys-812 together coordinate [4Fe-4S] cluster. Thiamine diphosphate-binding positions include Glu-814, Cys-837, 967–969, and 995–1000; these read DGW and TEVYSN. Cys-837 lines the [4Fe-4S] cluster pocket. Residues Asp-967, Thr-995, and Val-997 each contribute to the Mg(2+) site. Residue Asn-1000 coordinates pyruvate. [4Fe-4S] cluster is bound at residue Cys-1075.

Belongs to the pyruvate:ferredoxin/flavodoxin oxidoreductase family. As to quaternary structure, homodimer. [4Fe-4S] cluster is required as a cofactor. Requires thiamine diphosphate as cofactor. The cofactor is Mg(2+).

It catalyses the reaction 2 oxidized [2Fe-2S]-[ferredoxin] + pyruvate + CoA = 2 reduced [2Fe-2S]-[ferredoxin] + acetyl-CoA + CO2 + H(+). In terms of biological role, catalyzes the oxidative decarboxylation of pyruvate to acetyl-CoA and carbon dioxide. The two electrons that are generated as a result of pyruvate decarboxylation are used in the reduction of low potential ferredoxins, which provide reducing equivalents for central metabolism. Also catalyzes the reverse reaction, i.e. the synthesis of pyruvate from acetyl-CoA and carbon dioxide. Appears to function physiologically in both directions. The oxidation of pyruvate by PFOR is required to connect glycolysis and the Wood-Ljungdahl pathway of reductive acetogenesis. The conversion of acetyl-CoA to pyruvate links the Wood-Ljungdahl pathway of autotrophic CO2 fixation to the reductive tricarboxylic acid cycle. Can use methyl viologen as electron carrier in vitro. The polypeptide is Pyruvate:ferredoxin oxidoreductase (Moorella thermoacetica (strain ATCC 39073 / JCM 9320)).